The chain runs to 461 residues: Elongation factor 1-alpha, oocyte form (461 aa).

Position 2 is a n,N,N-trimethylglycine (glycine 2). A tr-type G domain is found at lysine 5–threonine 242. Residues glycine 14 to serine 21 are G1. GTP is bound at residue glycine 14–serine 21. A G2 region spans residues glycine 70–aspartate 74. The G3 stretch occupies residues aspartate 91 to glycine 94. GTP-binding positions include aspartate 91 to histidine 95 and asparagine 153 to aspartate 156. The G4 stretch occupies residues asparagine 153–aspartate 156. A G5 region spans residues serine 194–tryptophan 196. A 5-glutamyl glycerylphosphorylethanolamine mark is found at glutamate 301 and glutamate 374.

Belongs to the TRAFAC class translation factor GTPase superfamily. Classic translation factor GTPase family. EF-Tu/EF-1A subfamily. Oocyte.

It localises to the cytoplasm. Functionally, this protein promotes the GTP-dependent binding of aminoacyl-tRNA to the A-site of ribosomes during protein biosynthesis. This is Elongation factor 1-alpha, oocyte form (eef1ao) from Xenopus laevis (African clawed frog).